The following is a 148-amino-acid chain: Auxin-responsive protein SAUR65 (148 aa).

This sequence belongs to the ARG7 family.

It localises to the cell membrane. Its function is as follows. May promote auxin-stimulated organ elongation, such as hypocotyls, stamen filaments and petals. This is Auxin-responsive protein SAUR65 from Arabidopsis thaliana (Mouse-ear cress).